Reading from the N-terminus, the 111-residue chain is uncharacterized protein (111 aa).

Residues 20–39 traverse the membrane as a helical segment; it reads PVDTTGLIFFAVFASSFVLY.

It localises to the membrane. This is an uncharacterized protein from Saccharomyces cerevisiae (strain ATCC 204508 / S288c) (Baker's yeast).